Here is a 641-residue protein sequence, read N- to C-terminus: Toxin TseL (641 aa).

Interacts with VgrG3; this interaction allows TseL secretion to target cells.

It is found in the secreted. Its function is as follows. Toxin secreted by the type VI (T6SS) secretion system that acts on prokaryotic as well as eukaryotic target cells. The protein is Toxin TseL of Vibrio cholerae serotype O1 (strain ATCC 39315 / El Tor Inaba N16961).